The primary structure comprises 678 residues: Exoribonuclease 2 (678 aa).

The region spanning 193-521 (REDLTALPFV…INHRLLKAHI (329 aa)) is the RNB domain. Residues 568–650 (ETRFQAEIFD…ENRSLVGKPT (83 aa)) form the S1 motif domain. Residues 659–678 (ETQTSAEQPAEGAENNEPQV) form a disordered region.

Belongs to the RNR ribonuclease family. RNase II subfamily.

Its subcellular location is the cytoplasm. It catalyses the reaction Exonucleolytic cleavage in the 3'- to 5'-direction to yield nucleoside 5'-phosphates.. In terms of biological role, involved in mRNA degradation. Hydrolyzes single-stranded polyribonucleotides processively in the 3' to 5' direction. This chain is Exoribonuclease 2, found in Vibrio cholerae serotype O1 (strain ATCC 39315 / El Tor Inaba N16961).